We begin with the raw amino-acid sequence, 734 residues long: MADRSILTREIIVGGRPMILETGRLANQASGAVFVRYGDTAVLVTATVAPTVRAGIDFFPLTVDYEERFYAVGKIPGGFIKRESRPSEKAILSGRLIDRPIRPLFPKEMRNEVQVIATILSVDQDNAPEIAAMVGASAALHISEIPLKFPIGGVIVGRVDGRFVINPVLAQAEKSDMHLVVAGTKDAVMMVEAGAKEVPEEVILEAISFGHETVKEIVAFIERYREEALEMGLAKEKMVIEVAEPDPVLVEAVTGPATEKLDGVLRRCVNERLSKQERDSLLNNIKDELMQKFLADYPEQESLIKDLLDSIEKKLVRRMITEEGLRIDGRALNEVRPISVEVGVLPRPHGSGLFTRGQTQILSVVTLGTVSEEQILDGLGVEESKRFMHHYNFPPYSTGETRPLRSPGRREIGHGALAERALAAVIPGEEEFPYTIRIVSEALESNGSTSMGSVCGSTLALMDAGVPISAPVAGVAMGLIKEGDNFTVLTDIQGFEDHLGDMDFKVAGTAKGITALQMDIKIPGITREVFEKALAQAYEGRMHILNKMLEVLPAPRPELSPHAPRIIHITIDPDKIRDVIGPGGKVIKKIVEETGAEIDIEDDGRVFIAAVDQEKGRKAQEIIETLTKEVQTGEIYTGRVTRITDFGCFVEIIPGVLGMQGKEGLVHISQLAHHRVNRVEDVVKEGDVILVKVTGYDSQGRLKLSKKEATPPPESTAMKEGRAHRPSRRRESAR.

Asp497 and Asp503 together coordinate Mg(2+). A KH domain is found at 564–623 (PRIIHITIDPDKIRDVIGPGGKVIKKIVEETGAEIDIEDDGRVFIAAVDQEKGRKAQEII). The 75-residue stretch at 633–707 (GEIYTGRVTR…SQGRLKLSKK (75 aa)) folds into the S1 motif domain. Residues 700 to 734 (GRLKLSKKEATPPPESTAMKEGRAHRPSRRRESAR) form a disordered region. A compositionally biased stretch (basic and acidic residues) spans 717-734 (AMKEGRAHRPSRRRESAR).

This sequence belongs to the polyribonucleotide nucleotidyltransferase family. The cofactor is Mg(2+).

The protein localises to the cytoplasm. The catalysed reaction is RNA(n+1) + phosphate = RNA(n) + a ribonucleoside 5'-diphosphate. Its function is as follows. Involved in mRNA degradation. Catalyzes the phosphorolysis of single-stranded polyribonucleotides processively in the 3'- to 5'-direction. This is Polyribonucleotide nucleotidyltransferase from Pelotomaculum thermopropionicum (strain DSM 13744 / JCM 10971 / SI).